The sequence spans 151 residues: 3-hydroxyacyl-[acyl-carrier-protein] dehydratase FabZ (151 aa).

Residue H54 is part of the active site.

This sequence belongs to the thioester dehydratase family. FabZ subfamily.

The protein localises to the cytoplasm. The enzyme catalyses a (3R)-hydroxyacyl-[ACP] = a (2E)-enoyl-[ACP] + H2O. In terms of biological role, involved in unsaturated fatty acids biosynthesis. Catalyzes the dehydration of short chain beta-hydroxyacyl-ACPs and long chain saturated and unsaturated beta-hydroxyacyl-ACPs. The sequence is that of 3-hydroxyacyl-[acyl-carrier-protein] dehydratase FabZ from Idiomarina loihiensis (strain ATCC BAA-735 / DSM 15497 / L2-TR).